A 483-amino-acid polypeptide reads, in one-letter code: Regulatory protein ViaA (483 aa).

It belongs to the ViaA family. Homodimer. Interacts with RavA.

It is found in the cytoplasm. Its function is as follows. Component of the RavA-ViaA chaperone complex, which may act on the membrane to optimize the function of some of the respiratory chains. ViaA stimulates the ATPase activity of RavA. The protein is Regulatory protein ViaA of Escherichia fergusonii (strain ATCC 35469 / DSM 13698 / CCUG 18766 / IAM 14443 / JCM 21226 / LMG 7866 / NBRC 102419 / NCTC 12128 / CDC 0568-73).